Here is a 249-residue protein sequence, read N- to C-terminus: Low affinity immunoglobulin gamma Fc region receptor III-A (249 aa).

The first 20 residues, 1-20, serve as a signal peptide directing secretion; that stretch reads MWQLLLPTALVLTAFSGIQA. Residues 21–203 are Extracellular-facing; that stretch reads GLQKAVVNLD…SPSMFPPWHQ (183 aa). 2 consecutive Ig-like C2-type domains span residues 22–102 and 119–188; these read LQKA…VQLE and EGDP…FRIS. Intrachain disulfides connect Cys-46–Cys-88 and Cys-127–Cys-171. Asn-62, Asn-164, and Asn-179 each carry an N-linked (GlcNAc...) asparagine glycan. The chain crosses the membrane as a helical span at residues 204–224; the sequence is ITFCLLIGLLFAIDTVLYFSV. Residues 225 to 249 are Cytoplasmic-facing; sequence RRGLQSPVADYEEPKIQWSKEPQDK. Residue Tyr-235 is modified to Phosphotyrosine.

Forms a heterooligomeric complex with ITAM-containing signaling subunits FCER1G. Interacts (via transmembrane domain) with signaling subunits; this interaction is a prerequisite for receptor complex expression on the cell surface and intracellular signal transduction. Binds the Fc region of antigen-complexed IgG. Post-translationally, N-glycosylated. Phosphorylated following receptor ligation. In terms of tissue distribution, detected on myeloid cells, peripheral blood monocytes, splenic and bone marrow dendritic cells, and thioglycollate-elicited macrophages and neutrophils but absent from lymphoid populations with no expression observed on T cells, B cells, NK cells or other granulocytes (at protein level). Expressed in peripheral blood leukocytes, spleen, liver, thymus and small intestine. Expressed in splenic dendritic cell subsets (at protein level).

It is found in the cell membrane. Receptor for the invariable Fc fragment of immunoglobulin gamma (IgG). Binds with intermediate affinity to both IgG2a and IgG2b. Can bind to IgG2a and IgG2b monomers. Does not display binding to IgG1 or IgG3. Recognizes neutralizing virus-specific IgGs displayed on the cell surface of infected cells and triggers antibody-dependent cellular cytotoxicity (ADCC). Confers protection to lethal influenza virus infection. On splenic dendritic cells, uptakes antigen immune complexes and efficiently divert them into MHC class I and II antigen presentation pathways to provide for superior priming of CD4-positive and CD8-positive T cell immune responses. Mediates neutrophil activation by IgG complexes redundantly with FCGR2A. Plays a role in promoting bone resorption by enhancing osteoclast differentiation following binding to IgG2a. Also acts as a receptor for the Fc region of immunoglobulin epsilon (IgE). Binds with low affinity to both the a and b allotypes of IgE. Has also been shown to bind to IgE allotype a only but not to allotype b. Binds aggregated IgE but not the monomeric form and bound monomeric IgG is readily displaced by IgE complexes. Binding to IgE promotes macrophage-mediated phagocytosis, antigen presentation to T cells, production of pro-inflammatory cytokines and the late phase of cutaneous allergic reactions. Mediates enhanced ADCC in response to afucosylated IgGs. This is Low affinity immunoglobulin gamma Fc region receptor III-A from Mus musculus (Mouse).